A 673-amino-acid polypeptide reads, in one-letter code: Mechanosensitive ion channel protein 2, chloroplastic (673 aa).

The transit peptide at 1 to 75 (MALYGTLQLS…SVPCRTTAFR (75 aa)) directs the protein to the chloroplast. 5 consecutive transmembrane segments (helical) span residues 107–127 (FPFV…LWGL), 152–172 (YHVM…LFIC), 193–213 (LNFV…SSLI), 240–260 (ALYS…LGFS), and 264–284 (WLTA…EILT). The segment at 492–673 (KINGEDKSKS…QPNSGASTEP (182 aa)) is disordered. 3 stretches are compositionally biased toward basic and acidic residues: residues 510-525 (AEQE…KETS), 564-576 (TPKD…TEKP), and 617-642 (GSKR…ELTG). At S571 the chain carries Phosphoserine. Residues 661-673 (SQSQPNSGASTEP) are compositionally biased toward polar residues.

Belongs to the MscS (TC 1.A.23) family. As to expression, widely expressed.

It is found in the plastid. Its subcellular location is the chloroplast membrane. Its function is as follows. Mechanosensitive channel that opens in response to stretch forces in the membrane lipid bilayer. Controls plastid size, shape, and perhaps division during normal plant development by altering ion flux in response to changes in membrane tension. Acts as a component of the chloroplast division machinery. The polypeptide is Mechanosensitive ion channel protein 2, chloroplastic (MSL2) (Arabidopsis thaliana (Mouse-ear cress)).